The chain runs to 607 residues: V-type proton ATPase catalytic subunit A (607 aa).

251-258 (GAFGCGKT) contacts ATP.

Belongs to the ATPase alpha/beta chains family. As to quaternary structure, V-ATPase is a heteromultimeric enzyme composed of a peripheral catalytic V1 complex (components A to H) attached to an integral membrane V0 proton pore complex (components: a, c, c', c'', d, e, f and VOA1).

It is found in the vacuole membrane. It catalyses the reaction ATP + H2O + 4 H(+)(in) = ADP + phosphate + 5 H(+)(out). In terms of biological role, catalytic subunit of the V1 complex of vacuolar(H+)-ATPase (V-ATPase), a multisubunit enzyme composed of a peripheral complex (V1) that hydrolyzes ATP and a membrane integral complex (V0) that translocates protons. V-ATPase is responsible for acidifying and maintaining the pH of intracellular compartments. In Encephalitozoon cuniculi (strain GB-M1) (Microsporidian parasite), this protein is V-type proton ATPase catalytic subunit A (VMA1).